The chain runs to 474 residues: Glutamate--tRNA ligase (474 aa).

Residues 18–28 carry the 'HIGH' region motif; that stretch reads PSPTGFLHIGG. A 'KMSKS' region motif is present at residues 244 to 248; that stretch reads KLSKR. Lysine 247 is an ATP binding site.

Belongs to the class-I aminoacyl-tRNA synthetase family. Glutamate--tRNA ligase type 1 subfamily. Monomer.

Its subcellular location is the cytoplasm. The enzyme catalyses tRNA(Glu) + L-glutamate + ATP = L-glutamyl-tRNA(Glu) + AMP + diphosphate. Catalyzes the attachment of glutamate to tRNA(Glu) in a two-step reaction: glutamate is first activated by ATP to form Glu-AMP and then transferred to the acceptor end of tRNA(Glu). The sequence is that of Glutamate--tRNA ligase from Caulobacter sp. (strain K31).